The chain runs to 139 residues: MKLLIALLALVTAAIAQNGFGQGGYGGQGGFGGFGGLGGQAGFGGQIGFNGQGGVGGQVGIGQGGVHPGQGGFAGQGSPNQYQPGYGNPVGSGHFHGGNPVESGHFHGNPHEYPEHHGEHHREHHEHHGHHEHHGHHRH.

An N-terminal signal peptide occupies residues 1 to 16 (MKLLIALLALVTAAIA). Positions 60-75 (GIGQGGVHPGQGGFAG) are enriched in gly residues. The segment at 60–139 (GIGQGGVHPG…HHEHHGHHRH (80 aa)) is disordered. A compositionally biased stretch (basic and acidic residues) spans 109–121 (NPHEYPEHHGEHH). The span at 122–139 (REHHEHHGHHEHHGHHRH) shows a compositional bias: basic residues.

The protein resides in the secreted. Its function is as follows. Likely to be involved in the establishment of the head. This chain is Protein spalt-accessory (sala), found in Drosophila simulans (Fruit fly).